The primary structure comprises 91 residues: Acylphosphatase (91 aa).

Positions 6–91 (CMRCYISGRV…WEDYITFDVL (86 aa)) constitute an Acylphosphatase-like domain. Catalysis depends on residues R21 and N39.

Belongs to the acylphosphatase family.

It carries out the reaction an acyl phosphate + H2O = a carboxylate + phosphate + H(+). In Legionella pneumophila (strain Lens), this protein is Acylphosphatase (acyP).